Consider the following 331-residue polypeptide: Meiotic recombination protein P22 (331 aa).

Residues 132–187 (NNIQKEVHQRNSQRRSIQCTPKKRGRKPKQPAKKLQSRISTDQLGSTPSPSKLPAK) form a disordered region. Residues 152 to 167 (PKKRGRKPKQPAKKLQ) are compositionally biased toward basic residues. The span at 168–181 (SRISTDQLGSTPSP) shows a compositional bias: polar residues.

The protein belongs to the TOP6B-like family.

It is found in the chromosome. Required for formation of the mei-W68-mediated double-strand breaks (DSBs) that initiate meiotic recombination. This is Meiotic recombination protein P22 from Drosophila melanogaster (Fruit fly).